A 580-amino-acid polypeptide reads, in one-letter code: Cytochrome P450 monooxygenase helB1 (580 aa).

The interval 1–32 (MRTYAIRPVSNRLPGPIEPKKHRRDRDNSTTG) is disordered. Residue Asn-28 is glycosylated (N-linked (GlcNAc...) asparagine). Residues 61–81 (FLNTISVLQVLAAIFIGALTY) traverse the membrane as a helical segment. Cys-497 serves as a coordination point for heme.

The protein belongs to the cytochrome P450 family. It depends on heme as a cofactor.

The protein resides in the membrane. It participates in mycotoxin biosynthesis. Functionally, cytochrome P450 monooxygenase; part of the gene cluster that mediates the biosynthesis of helvolic acid, an antibacterial nortriterpenoid. Protostadienol synthase helA cyclizes (3S)-oxidosqualene to (17Z)-protosta-17(20),24-dien-3-beta-ol (protostadienol). The synthesis of protostadienol is followed by several steps of monooxygenation, dehydrogenation, and acyl transfer to yield the final helvolic acid. Following the cyclization to the tetracyclic protostadienol by helA, cytochrome P450 monooxygenases helB1-mediated and helB2-mediated oxidation at C-4 and C-16, acyltransferase helD2-dependent acetylation of 16-OH, oxidation of C-21 by cytochrome P450 monooxygenase helB4, and short chain dehydrogenase helC-dependent oxidative decarboxylation yield the fusidane skeleton. This intermediate is further modified in three additional steps mediated by the cytochrome P450 monooxygenase helB3, the acyltransferase helD1, and the 3-ketosteroid 1-dehydrogenase helE to give helvolic acid. Compared with the late stages in the biosynthesis of helvolic acid, enzymes involved in the early stage modifications act in a relatively strict order. The hydroxylation of C-16 by helB1 and subsequent acetylation by helD2 should occur before the helB3-mediated oxidation of C-21. C-4 demethylation in fusidane-type antibiotics proceeds in an unusual manner though it is also achieved by oxidative decarboxylation. The methyl group at C-4 beta position is oxidized by helB1 and subsequently removed by the short chain dehydrogenase helC. The sequence is that of Cytochrome P450 monooxygenase helB1 from Aspergillus fumigatus (strain ATCC MYA-4609 / CBS 101355 / FGSC A1100 / Af293) (Neosartorya fumigata).